Consider the following 915-residue polypeptide: DNA repair-scaffolding protein (915 aa).

A compositionally biased stretch (basic residues) spans 1 to 15 (MPRGSRARGSKRKRS). 2 disordered regions span residues 1–30 (MPRG…RPLQ) and 56–114 (FQNT…EDKT). Residues 56–65 (FQNTSGNPSL) show a composition bias toward polar residues. The span at 67–85 (AEEKTITEKHLELCPRPKQ) shows a compositional bias: basic and acidic residues. Residues 86 to 107 (ETTTSKSTSGLTDITWSSSGSD) are compositionally biased toward polar residues. The necessary for interaction with RAD51 stretch occupies residues 151–450 (EISDCASCAS…GTAWTHGHKE (300 aa)).

In terms of assembly, found in a complex, at least composed of BLM, RAD51 and SPIDR; the complex formation is mediated by SPIDR. Interacts (via C-terminal region) with BLM; the interaction is direct. Interacts with RAD51; the interaction is direct. Interacts (via the C-terminal region) with FIGNL1 (via N-terminal one-half region); the interaction is direct.

The protein resides in the nucleus. Its function is as follows. Plays a role in DNA double-strand break (DBS) repair via homologous recombination (HR). Serves as a scaffolding protein that helps to promote the recruitment of DNA-processing enzymes like the helicase BLM and recombinase RAD51 to site of DNA damage, and hence contributes to maintain genomic integrity. This is DNA repair-scaffolding protein (SPIDR) from Homo sapiens (Human).